The sequence spans 183 residues: Ribosome-binding factor A (183 aa).

The tract at residues 132–183 (PAGEADPYRDNGSVAQSPAPGGLGIRTSDGPEAVEAPLTCGGDTGDDDRPKE) is disordered.

This sequence belongs to the RbfA family. Monomer. Binds 30S ribosomal subunits, but not 50S ribosomal subunits or 70S ribosomes.

It localises to the cytoplasm. One of several proteins that assist in the late maturation steps of the functional core of the 30S ribosomal subunit. Associates with free 30S ribosomal subunits (but not with 30S subunits that are part of 70S ribosomes or polysomes). Required for efficient processing of 16S rRNA. May interact with the 5'-terminal helix region of 16S rRNA. The protein is Ribosome-binding factor A of Mycobacterium tuberculosis (strain ATCC 25177 / H37Ra).